A 197-amino-acid chain; its full sequence is MQNLTVAILAGGKSSRMGQNKALLPLGTMKIIEHLVTNLRPIASELLLVANTDEYAFLNLPVYRDRFPGQGPLAGIETALRVAFNEKVYITACDLPLLPAEIPRFLAENTEDYDVTVLAYKGKIEPLIGIYRKSIYPVVEKHLILRKNKIIDFYPQVKVKIINFEQLPENLQREEFLLNVNTPADYEKLLKIFSLKE.

GTP is bound by residues 9–11 (LAG), Lys21, Asp65, and Asp94. Mg(2+) is bound at residue Asp94.

The protein belongs to the MobA family. It depends on Mg(2+) as a cofactor.

It localises to the cytoplasm. It carries out the reaction Mo-molybdopterin + GTP + H(+) = Mo-molybdopterin guanine dinucleotide + diphosphate. Transfers a GMP moiety from GTP to Mo-molybdopterin (Mo-MPT) cofactor (Moco or molybdenum cofactor) to form Mo-molybdopterin guanine dinucleotide (Mo-MGD) cofactor. This Carboxydothermus hydrogenoformans (strain ATCC BAA-161 / DSM 6008 / Z-2901) protein is Probable molybdenum cofactor guanylyltransferase.